The sequence spans 20 residues: Large ribosomal subunit protein bL31 (20 aa).

Residues Xaa16 and Xaa18 each coordinate Zn(2+).

Belongs to the bacterial ribosomal protein bL31 family. Type A subfamily. Part of the 50S ribosomal subunit. Zn(2+) is required as a cofactor.

Its function is as follows. Binds the 23S rRNA. This is Large ribosomal subunit protein bL31 (rpmE) from Ectopseudomonas mendocina (Pseudomonas mendocina).